The following is a 1538-amino-acid chain: Dicer-like protein 1 (1538 aa).

The tract at residues D39 to Q72 is disordered. Positions A45 to D55 are enriched in basic and acidic residues. The region spanning L134–L315 is the Helicase ATP-binding domain. L147–T154 lines the ATP pocket. A DEAH box motif is present at residues D260–H263. One can recognise a Helicase C-terminal domain in the interval E460–H619. In terms of domain architecture, Dicer dsRNA-binding fold spans A652–A742. The 129-residue stretch at D892–A1020 folds into the PAZ domain. 2 RNase III domains span residues I1044 to G1203 and A1254 to K1406. Mg(2+) contacts are provided by E1295, D1392, and E1395. The region spanning T1440–G1508 is the DRBM domain. Residues C1452, H1479, C1520, and C1522 each coordinate Zn(2+).

The protein belongs to the helicase family. Dicer subfamily. The cofactor is Mg(2+). Mn(2+) serves as cofactor.

Dicer-like endonuclease involved in cleaving double-stranded RNA in the RNA interference (RNAi) pathway. Produces 21 to 25 bp dsRNAs (siRNAs) which target the selective destruction of homologous RNAs leading to sequence-specific suppression of gene expression, called post-transcriptional gene silencing (PTGS). Part of a broad host defense response against viral infection and transposons. In Neosartorya fischeri (strain ATCC 1020 / DSM 3700 / CBS 544.65 / FGSC A1164 / JCM 1740 / NRRL 181 / WB 181) (Aspergillus fischerianus), this protein is Dicer-like protein 1 (dcl1).